The primary structure comprises 101 residues: Small ribosomal subunit protein uS14 (101 aa).

Residues Met-1–Asn-10 are compositionally biased toward basic and acidic residues. Residues Met-1–Lys-23 form a disordered region. The segment covering Asn-11–Lys-23 has biased composition (basic residues).

In terms of assembly, part of the 30S ribosomal subunit. Contacts proteins S3 and S10.

In terms of biological role, binds 16S rRNA, required for the assembly of 30S particles and may also be responsible for determining the conformation of the 16S rRNA at the A site. This is Small ribosomal subunit protein uS14 from Rhodopseudomonas palustris (strain ATCC BAA-98 / CGA009).